The sequence spans 266 residues: Uxu operon regulator (266 aa).

The 69-residue stretch at 23-91 (NRTYTRIGQL…KGSGVYVVRT (69 aa)) folds into the HTH gntR-type domain. Positions 51 to 70 (EREISEKFGVSRTIVREAMV) form a DNA-binding region, H-T-H motif.

Functionally, repressor for the uxuRBA operon. This Haemophilus influenzae (strain ATCC 51907 / DSM 11121 / KW20 / Rd) protein is Uxu operon regulator (uxuR).